Here is a 249-residue protein sequence, read N- to C-terminus: MLLIPAIDLKDGHCVRLKQGEMDDATVFSEDPAAMARHWIEQGARRLHLVDLNGAFAGKPKNGAAIRSIVDEVGDDIPVQLGGGVRDLDTIEHYLDNGISYIIIGTAAVKNPGFLHDACGAFPGHIIVGLDARDGKVAVDGWSKMTGHDVVDLAKKYEDYGVEAVIYTDIGRDGMLSGVNVEATVRLAQALRIPVIASGGIASIADIDALCAVEAEGIMGAITGRAIYEGALDFAVAQARADELNGGEG.

D8 serves as the catalytic Proton acceptor. The active-site Proton donor is the D131.

This sequence belongs to the HisA/HisF family.

The protein resides in the cytoplasm. It carries out the reaction 1-(5-phospho-beta-D-ribosyl)-5-[(5-phospho-beta-D-ribosylamino)methylideneamino]imidazole-4-carboxamide = 5-[(5-phospho-1-deoxy-D-ribulos-1-ylimino)methylamino]-1-(5-phospho-beta-D-ribosyl)imidazole-4-carboxamide. It functions in the pathway amino-acid biosynthesis; L-histidine biosynthesis; L-histidine from 5-phospho-alpha-D-ribose 1-diphosphate: step 4/9. The sequence is that of 1-(5-phosphoribosyl)-5-[(5-phosphoribosylamino)methylideneamino] imidazole-4-carboxamide isomerase from Aromatoleum aromaticum (strain DSM 19018 / LMG 30748 / EbN1) (Azoarcus sp. (strain EbN1)).